We begin with the raw amino-acid sequence, 485 residues long: Aspartyl/glutamyl-tRNA(Asn/Gln) amidotransferase subunit B (485 aa).

The protein belongs to the GatB/GatE family. GatB subfamily. Heterotrimer of A, B and C subunits.

The catalysed reaction is L-glutamyl-tRNA(Gln) + L-glutamine + ATP + H2O = L-glutaminyl-tRNA(Gln) + L-glutamate + ADP + phosphate + H(+). It carries out the reaction L-aspartyl-tRNA(Asn) + L-glutamine + ATP + H2O = L-asparaginyl-tRNA(Asn) + L-glutamate + ADP + phosphate + 2 H(+). Allows the formation of correctly charged Asn-tRNA(Asn) or Gln-tRNA(Gln) through the transamidation of misacylated Asp-tRNA(Asn) or Glu-tRNA(Gln) in organisms which lack either or both of asparaginyl-tRNA or glutaminyl-tRNA synthetases. The reaction takes place in the presence of glutamine and ATP through an activated phospho-Asp-tRNA(Asn) or phospho-Glu-tRNA(Gln). The sequence is that of Aspartyl/glutamyl-tRNA(Asn/Gln) amidotransferase subunit B from Opitutus terrae (strain DSM 11246 / JCM 15787 / PB90-1).